A 71-amino-acid chain; its full sequence is uncharacterized protein (71 aa).

This is an uncharacterized protein from Escherichia coli (strain K12).